Here is a 264-residue protein sequence, read N- to C-terminus: uncharacterized protein (264 aa).

The 241-residue stretch at 3–243 (LQLDNVSLKR…QILSAFFDTP (241 aa)) folds into the ABC transporter domain. 35–42 (GLNGAGKT) lines the ATP pocket.

Belongs to the ABC transporter superfamily.

This is an uncharacterized protein from Bacillus subtilis (strain 168).